The sequence spans 156 residues: Small ribosomal subunit protein uS7 (156 aa).

Belongs to the universal ribosomal protein uS7 family. As to quaternary structure, part of the 30S ribosomal subunit. Contacts proteins S9 and S11.

In terms of biological role, one of the primary rRNA binding proteins, it binds directly to 16S rRNA where it nucleates assembly of the head domain of the 30S subunit. Is located at the subunit interface close to the decoding center, probably blocks exit of the E-site tRNA. This is Small ribosomal subunit protein uS7 from Rhodopseudomonas palustris (strain BisA53).